Consider the following 216-residue polypeptide: Large ribosomal subunit protein uL1 (216 aa).

Belongs to the universal ribosomal protein uL1 family.

The chain is Large ribosomal subunit protein uL1 from Caenorhabditis elegans.